The chain runs to 832 residues: Protein P (832 aa).

Positions 1–177 (MPLSCPHFRK…FCGSPYSWEQ (177 aa)) are terminal protein domain (TP). The tract at residues 178-335 (ELQHGAEPVC…YCLSHLVNLL (158 aa)) is spacer. Residues 208-224 (KQSRLGLQSQQRQLARS) are compositionally biased toward low complexity. A disordered region spans residues 208-241 (KQSRLGLQSQQRQLARSHQGRSGSIRARVHSTTR). Positions 336-679 (EDWGPCTEHG…YLTLYPVARQ (344 aa)) are polymerase/reverse transcriptase domain (RT). The Reverse transcriptase domain occupies 346–589 (EHHIRIPRTP…YSLNFMGYII (244 aa)). Positions 418, 540, and 541 each coordinate Mg(2+).

This sequence belongs to the hepadnaviridae P protein family.

The catalysed reaction is DNA(n) + a 2'-deoxyribonucleoside 5'-triphosphate = DNA(n+1) + diphosphate. It catalyses the reaction Endonucleolytic cleavage to 5'-phosphomonoester.. With respect to regulation, activated by host HSP70 and HSP40 in vitro to be able to bind the epsilon loop of the pgRNA. Because deletion of the RNase H region renders the protein partly chaperone-independent, the chaperones may be needed indirectly to relieve occlusion of the RNA-binding site by this domain. Inhibited by several reverse-transcriptase inhibitors: Lamivudine, Adefovir and Entecavir. Functionally, multifunctional enzyme that converts the viral RNA genome into dsDNA in viral cytoplasmic capsids. This enzyme displays a DNA polymerase activity that can copy either DNA or RNA templates, and a ribonuclease H (RNase H) activity that cleaves the RNA strand of RNA-DNA heteroduplexes in a partially processive 3'- to 5'-endonucleasic mode. Neo-synthesized pregenomic RNA (pgRNA) are encapsidated together with the P protein, and reverse-transcribed inside the nucleocapsid. Initiation of reverse-transcription occurs first by binding the epsilon loop on the pgRNA genome, and is initiated by protein priming, thereby the 5'-end of (-)DNA is covalently linked to P protein. Partial (+)DNA is synthesized from the (-)DNA template and generates the relaxed circular DNA (RC-DNA) genome. After budding and infection, the RC-DNA migrates in the nucleus, and is converted into a plasmid-like covalently closed circular DNA (cccDNA). The activity of P protein does not seem to be necessary for cccDNA generation, and is presumably released from (+)DNA by host nuclear DNA repair machinery. In Gibbon hepatitis B virus subtype ayw3q (isolate Hope) (HBVgbn), this protein is Protein P.